A 307-amino-acid polypeptide reads, in one-letter code: uncharacterized protein (307 aa).

This is an uncharacterized protein from Acidianus hospitalis (AFV-1).